We begin with the raw amino-acid sequence, 336 residues long: GTPase Obg (336 aa).

An Obg domain is found at 1-159 (MKFIDEATII…RRLQLELILL (159 aa)). An OBG-type G domain is found at 160 to 333 (ADVGLLGLPN…LCRDIMLFIN (174 aa)). GTP is bound by residues 166–173 (GLPNVGKS), 191–195 (FTTLV), 213–216 (DIPG), 283–286 (NKLD), and 314–316 (SAM). Mg(2+) is bound by residues serine 173 and threonine 193.

It belongs to the TRAFAC class OBG-HflX-like GTPase superfamily. OBG GTPase family. As to quaternary structure, monomer. It depends on Mg(2+) as a cofactor.

It localises to the cytoplasm. Its function is as follows. An essential GTPase which binds GTP, GDP and possibly (p)ppGpp with moderate affinity, with high nucleotide exchange rates and a fairly low GTP hydrolysis rate. Plays a role in control of the cell cycle, stress response, ribosome biogenesis and in those bacteria that undergo differentiation, in morphogenesis control. The sequence is that of GTPase Obg from Baumannia cicadellinicola subsp. Homalodisca coagulata.